Here is a 312-residue protein sequence, read N- to C-terminus: Cytochrome c biogenesis protein CcsA (312 aa).

8 helical membrane-spanning segments follow: residues 12 to 32 (NLVFGILLFAMTIYWISLSFF), 47 to 67 (IVANILLFFILGSRWIVAGYF), 72 to 92 (LYESLLFLTWTLLTIYLYVEF), 98 to 118 (LVGAILIPVALLINGFANLTL), 144 to 164 (MMLSYGTLIMGSLLCILFLVI), 220 to 240 (IIGLGFPFLTIGIIAGGVWAN), 254 to 271 (TWALITWIVFATYLHSRI), and 281 to 301 (AILGGLGFFVIWICYLGVNFL).

This sequence belongs to the CcmF/CycK/Ccl1/NrfE/CcsA family. In terms of assembly, may interact with Ccs1.

The protein resides in the plastid. It localises to the chloroplast thylakoid membrane. Functionally, required during biogenesis of c-type cytochromes (cytochrome c6 and cytochrome f) at the step of heme attachment. In Trieres chinensis (Marine centric diatom), this protein is Cytochrome c biogenesis protein CcsA.